We begin with the raw amino-acid sequence, 655 residues long: Fidgetin-like protein 1 (655 aa).

The interval 289–313 (QQKKHSNQPQRNPGPLYGGGKKSLG) is disordered. Residues Ala385 and 425–430 (GTGKTL) contribute to the ATP site.

Belongs to the AAA ATPase family. Hexamer. It depends on Mg(2+) as a cofactor.

It is found in the nucleus. The protein resides in the cytoplasm. The protein localises to the perinuclear region. The catalysed reaction is ATP + H2O = ADP + phosphate + H(+). Its function is as follows. May be involved in DNA double-strand break (DBS) repair via homologous recombination (HR). May regulate osteoblast proliferation and differentiation. This Xenopus laevis (African clawed frog) protein is Fidgetin-like protein 1 (fignl1).